The sequence spans 63 residues: MPKMKTVRGAAKRFKVGKNKIKRGSAFRSHILTKKPSKRMRDLRGPQYVDSTNVPAVRKMLGV.

The protein belongs to the bacterial ribosomal protein bL35 family.

This chain is Large ribosomal subunit protein bL35, found in Campylobacter concisus (strain 13826).